The sequence spans 1005 residues: DNA double-strand break repair Rad50 ATPase (1005 aa).

ATP is bound by residues Lys14, 35 to 40, 62 to 64, and Gln134; these read GSGKSS and ITK. Coiled-coil stretches lie at residues 189–230, 292–321, 346–379, and 404–498; these read KENY…IEKL, LVDEIRKIESRLRELKSHYEDYLKLTKQLE, LDTLLNKIKDEIERVETIKDLLEELKNLNEEIEK, and AVEY…LKEV. In terms of domain architecture, Zinc-hook spans 457–554; it reads IEEKKKVLEN…DIEKLKKEID (98 aa). 2 residues coordinate Zn(2+): Cys502 and Cys505. Coiled-coil stretches lie at residues 523-600, 656-692, and 800-834; these read TQLN…YVIN, KEKCREELNKLREDEREINRLKDKLNELKNKEKELIE, and RQELDNVREQKTEIETGIEYLKKDVESLKARLKEM.

The protein belongs to the SMC family. RAD50 subfamily. As to quaternary structure, homodimer. Forms a heterotetramer composed of two Mre11 subunits and two Rad50 subunits. Requires Zn(2+) as cofactor.

Functionally, part of the Rad50/Mre11 complex, which is involved in the early steps of DNA double-strand break (DSB) repair. The complex may facilitate opening of the processed DNA ends to aid in the recruitment of HerA and NurA. Rad50 controls the balance between DNA end bridging and DNA resection via ATP-dependent structural rearrangements of the Rad50/Mre11 complex. This chain is DNA double-strand break repair Rad50 ATPase, found in Methanocaldococcus jannaschii (strain ATCC 43067 / DSM 2661 / JAL-1 / JCM 10045 / NBRC 100440) (Methanococcus jannaschii).